The chain runs to 292 residues: ER membrane protein complex subunit 2 (292 aa).

The stretch at 163–196 (AELWWYASEIYFEMGQFEKACYCLEQVLCITPFN) is one TPR repeat.

It belongs to the EMC2 family. Component of the ER membrane protein complex (EMC), which is composed of EMC1, EMC2, EMC3, EMC4, EMC5 and EMC6.

It is found in the endoplasmic reticulum membrane. Part of the endoplasmic reticulum membrane protein complex (EMC) that enables the energy-independent insertion into endoplasmic reticulum membranes of newly synthesized membrane proteins. Preferentially accommodates proteins with transmembrane domains that are weakly hydrophobic or contain destabilizing features such as charged and aromatic residues. Involved in the cotranslational insertion of multi-pass membrane proteins in which stop-transfer membrane-anchor sequences become ER membrane spanning helices. It is also required for the post-translational insertion of tail-anchored/TA proteins in endoplasmic reticulum membranes. By mediating the proper cotranslational insertion of N-terminal transmembrane domains in an N-exo topology, with translocated N-terminus in the lumen of the ER, controls the topology of multi-pass membrane proteins. This chain is ER membrane protein complex subunit 2 (EMC2), found in Saccharomyces cerevisiae (strain ATCC 204508 / S288c) (Baker's yeast).